The sequence spans 211 residues: Regulator of G-protein signaling 2 (211 aa).

Disordered regions lie at residues 14 to 33 (GPMD…REKM) and 49 to 71 (LQNS…TFIK). The tract at residues 32-66 (KMKRTLLKDWKSRLSYFLQNSSSPGKPKTGKKSKQ) is necessary for membrane association. Residues 79-116 (LWSEAFDELLASKYGLAAFRAFLKSEFCEENIEFWLAC) are necessary to inhibit protein synthesis. An RGS domain is found at 83 to 199 (AFDELLASKY…LESEFYQDLC (117 aa)).

In terms of assembly, interacts with GNAQ. Does not interact with GNAI1 and GNAI3. Interacts with EIF2B5. Interacts with PRKG1 (isoform alpha). In terms of processing, phosphorylated by protein kinase C. Phosphorylation by PRKG1 leads to activation of RGS2 activity.

Its subcellular location is the cell membrane. It localises to the cytoplasm. The protein localises to the nucleus. It is found in the nucleolus. Functionally, regulates G protein-coupled receptor signaling cascades. Inhibits signal transduction by increasing the GTPase activity of G protein alpha subunits, thereby driving them into their inactive GDP-bound form. It is involved in the negative regulation of the angiotensin-activated signaling pathway. Plays a role in the regulation of blood pressure in response to signaling via G protein-coupled receptors and GNAQ. Plays a role in regulating the constriction and relaxation of vascular smooth muscle. Binds EIF2B5 and blocks its activity, thereby inhibiting the translation of mRNA into protein. This chain is Regulator of G-protein signaling 2 (RGS2), found in Bos taurus (Bovine).